The chain runs to 909 residues: Protein translocase subunit SecA (909 aa).

ATP-binding positions include Q87, 105-109 (GEGKT), and D507. Residues 834-909 (EAVEEQRRRQ…KYKQCCGKLS (76 aa)) are disordered. Positions 837 to 848 (EEQRRRQGDMQY) are enriched in basic and acidic residues. A compositionally biased stretch (gly residues) spans 859–871 (QGAGGEGAAGGTA). Positions 893, 895, 904, and 905 each coordinate Zn(2+).

The protein belongs to the SecA family. Monomer and homodimer. Part of the essential Sec protein translocation apparatus which comprises SecA, SecYEG and auxiliary proteins SecDF-YajC and YidC. Zn(2+) is required as a cofactor.

The protein resides in the cell inner membrane. It localises to the cytoplasm. It catalyses the reaction ATP + H2O + cellular proteinSide 1 = ADP + phosphate + cellular proteinSide 2.. Part of the Sec protein translocase complex. Interacts with the SecYEG preprotein conducting channel. Has a central role in coupling the hydrolysis of ATP to the transfer of proteins into and across the cell membrane, serving both as a receptor for the preprotein-SecB complex and as an ATP-driven molecular motor driving the stepwise translocation of polypeptide chains across the membrane. This chain is Protein translocase subunit SecA, found in Alkalilimnicola ehrlichii (strain ATCC BAA-1101 / DSM 17681 / MLHE-1).